A 299-amino-acid chain; its full sequence is tRNA dimethylallyltransferase (299 aa).

10-17 (GATATGKS) contacts ATP. Residue 12–17 (TATGKS) participates in substrate binding. The tract at residues 35–38 (DSRQ) is interaction with substrate tRNA.

This sequence belongs to the IPP transferase family. In terms of assembly, monomer. It depends on Mg(2+) as a cofactor.

The enzyme catalyses adenosine(37) in tRNA + dimethylallyl diphosphate = N(6)-dimethylallyladenosine(37) in tRNA + diphosphate. In terms of biological role, catalyzes the transfer of a dimethylallyl group onto the adenine at position 37 in tRNAs that read codons beginning with uridine, leading to the formation of N6-(dimethylallyl)adenosine (i(6)A). The polypeptide is tRNA dimethylallyltransferase (Rippkaea orientalis (strain PCC 8801 / RF-1) (Cyanothece sp. (strain PCC 8801))).